A 177-amino-acid chain; its full sequence is Putative acetyltransferase FG08082 (177 aa).

One can recognise an N-acetyltransferase domain in the interval 81 to 174 (EEWEQVGLVR…VSIAMVEGPG (94 aa)).

This sequence belongs to the acetyltransferase family.

It participates in mycotoxin biosynthesis. Its function is as follows. Putative acetyltransferase; part of the gene cluster that mediates the biosynthesis of butenolide, a mycotoxin that shows antibiotic activity but does not seem to play a major role in the spread of head blight in wheat. Butenolide is derived from glutamic acid via a 4-acetamido-2-butenoic acid intermediate. The predicted function of the NADH:flavin oxidoreductase FG08077, the cytochrome P450 monooxygenase FG08079, the decarboxylase FG08083, and the putative acetyltransferase FG08082 are consistent with this pathway, however, the respective activities of the butelonide biosynthesis cluster enzymes have still to be experimentally determined. In Gibberella zeae (strain ATCC MYA-4620 / CBS 123657 / FGSC 9075 / NRRL 31084 / PH-1) (Wheat head blight fungus), this protein is Putative acetyltransferase FG08082.